A 341-amino-acid polypeptide reads, in one-letter code: Phenylalanine--tRNA ligase alpha subunit (341 aa).

A Mg(2+)-binding site is contributed by glutamate 259.

The protein belongs to the class-II aminoacyl-tRNA synthetase family. Phe-tRNA synthetase alpha subunit type 1 subfamily. As to quaternary structure, tetramer of two alpha and two beta subunits. The cofactor is Mg(2+).

It is found in the cytoplasm. The enzyme catalyses tRNA(Phe) + L-phenylalanine + ATP = L-phenylalanyl-tRNA(Phe) + AMP + diphosphate + H(+). In Mycobacterium bovis (strain ATCC BAA-935 / AF2122/97), this protein is Phenylalanine--tRNA ligase alpha subunit.